Consider the following 316-residue polypeptide: Tyrosine recombinase XerC (316 aa).

Residues 11–97 (SGLRKPLDQF…SLRSFFDFLI (87 aa)) form the Core-binding (CB) domain. The 181-residue stretch at 118–298 (PLPKNLDVDE…DFQHLADVYD (181 aa)) folds into the Tyr recombinase domain. Residues R157, K181, H250, R253, and H276 contribute to the active site. The active-site O-(3'-phospho-DNA)-tyrosine intermediate is Y285.

This sequence belongs to the 'phage' integrase family. XerC subfamily. Forms a cyclic heterotetrameric complex composed of two molecules of XerC and two molecules of XerD.

The protein resides in the cytoplasm. Functionally, site-specific tyrosine recombinase, which acts by catalyzing the cutting and rejoining of the recombining DNA molecules. The XerC-XerD complex is essential to convert dimers of the bacterial chromosome into monomers to permit their segregation at cell division. It also contributes to the segregational stability of plasmids. This chain is Tyrosine recombinase XerC, found in Vibrio vulnificus (strain CMCP6).